Consider the following 441-residue polypeptide: Ribosomal protein uS12 methylthiotransferase RimO (441 aa).

The MTTase N-terminal domain occupies 8-118 (PKIGFVSLGC…VLEHVHHYVP (111 aa)). Cys17, Cys53, Cys82, Cys150, Cys154, and Cys157 together coordinate [4Fe-4S] cluster. The region spanning 136-373 (LTPRHYAYLK…MQLQQQISAE (238 aa)) is the Radical SAM core domain. Positions 376-441 (QEKVGKEILV…DEYDLWGSRV (66 aa)) constitute a TRAM domain.

The protein belongs to the methylthiotransferase family. RimO subfamily. [4Fe-4S] cluster is required as a cofactor.

It localises to the cytoplasm. The catalysed reaction is L-aspartate(89)-[ribosomal protein uS12]-hydrogen + (sulfur carrier)-SH + AH2 + 2 S-adenosyl-L-methionine = 3-methylsulfanyl-L-aspartate(89)-[ribosomal protein uS12]-hydrogen + (sulfur carrier)-H + 5'-deoxyadenosine + L-methionine + A + S-adenosyl-L-homocysteine + 2 H(+). In terms of biological role, catalyzes the methylthiolation of an aspartic acid residue of ribosomal protein uS12. This Escherichia fergusonii (strain ATCC 35469 / DSM 13698 / CCUG 18766 / IAM 14443 / JCM 21226 / LMG 7866 / NBRC 102419 / NCTC 12128 / CDC 0568-73) protein is Ribosomal protein uS12 methylthiotransferase RimO.